The following is a 474-amino-acid chain: L-arabinose isomerase 2 (474 aa).

Mn(2+) contacts are provided by E306, E331, H348, and H447.

Belongs to the arabinose isomerase family. Requires Mn(2+) as cofactor.

The catalysed reaction is beta-L-arabinopyranose = L-ribulose. It functions in the pathway carbohydrate degradation; L-arabinose degradation via L-ribulose; D-xylulose 5-phosphate from L-arabinose (bacterial route): step 1/3. In terms of biological role, catalyzes the conversion of L-arabinose to L-ribulose. The sequence is that of L-arabinose isomerase 2 from Bacillus licheniformis (strain ATCC 14580 / DSM 13 / JCM 2505 / CCUG 7422 / NBRC 12200 / NCIMB 9375 / NCTC 10341 / NRRL NRS-1264 / Gibson 46).